The primary structure comprises 422 residues: Phosphoribosylamine--glycine ligase (422 aa).

One can recognise an ATP-grasp domain in the interval Lys107–Asp314. Val133–Ser194 contacts ATP. Positions 284 and 286 each coordinate Mg(2+).

It belongs to the GARS family. Mg(2+) serves as cofactor. Requires Mn(2+) as cofactor.

It carries out the reaction 5-phospho-beta-D-ribosylamine + glycine + ATP = N(1)-(5-phospho-beta-D-ribosyl)glycinamide + ADP + phosphate + H(+). Its pathway is purine metabolism; IMP biosynthesis via de novo pathway; N(1)-(5-phospho-D-ribosyl)glycinamide from 5-phospho-alpha-D-ribose 1-diphosphate: step 2/2. This Ralstonia nicotianae (strain ATCC BAA-1114 / GMI1000) (Ralstonia solanacearum) protein is Phosphoribosylamine--glycine ligase.